We begin with the raw amino-acid sequence, 87 residues long: Toxin Cll3 (87 aa).

The first 19 residues, 1 to 19 (MNSLLMITACLAVIGTVWA), serve as a signal peptide directing secretion. The 66-residue stretch at 20-85 (KEGYIVNYYD…VWPLPNKTCY (66 aa)) folds into the LCN-type CS-alpha/beta domain. Cystine bridges form between cysteine 31-cysteine 84, cysteine 35-cysteine 60, cysteine 44-cysteine 65, and cysteine 48-cysteine 67. Position 85 is a tyrosine amide (tyrosine 85).

The protein belongs to the long (4 C-C) scorpion toxin superfamily. Sodium channel inhibitor family. Beta subfamily. As to expression, expressed by the venom gland.

The protein resides in the secreted. In terms of biological role, beta toxins bind voltage-independently at site-4 of sodium channels (Nav) and shift the voltage of activation toward more negative potentials thereby affecting sodium channel activation and promoting spontaneous and repetitive firing. The sequence is that of Toxin Cll3 from Centruroides limpidus (Mexican scorpion).